Consider the following 801-residue polypeptide: Mitochondrial intermediate peptidase (801 aa).

The transit peptide at 1 to 41 directs the protein to the mitochondrion; the sequence is MKDQLLVPLRRRPWTCQKCLQRLQLPRHQTRRSFETAASPF. His-564 is a binding site for Zn(2+). Glu-565 is an active-site residue. Zn(2+)-binding residues include His-568 and His-571.

This sequence belongs to the peptidase M3 family. The cofactor is Zn(2+).

The protein localises to the mitochondrion matrix. It carries out the reaction Release of an N-terminal octapeptide as second stage of processing of some proteins imported into the mitochondrion.. In terms of biological role, cleaves proteins, imported into the mitochondrion, to their mature size. While most mitochondrial precursor proteins are processed to the mature form in one step by mitochondrial processing peptidase (MPP), the sequential cleavage by MIP of an octapeptide after initial processing by MPP is a required step for a subgroup of nuclear-encoded precursor proteins destined for the matrix or the inner membrane. This is Mitochondrial intermediate peptidase (oct1) from Aspergillus fumigatus (strain ATCC MYA-4609 / CBS 101355 / FGSC A1100 / Af293) (Neosartorya fumigata).